Here is a 274-residue protein sequence, read N- to C-terminus: Glutamate--cysteine ligase regulatory subunit (274 aa).

K263 is modified (N6-acetyllysine).

It belongs to the aldo/keto reductase family. Glutamate--cysteine ligase light chain subfamily. In terms of assembly, heterodimer of a catalytic heavy chain and a regulatory light chain. In all tissues examined. Highest levels in skeletal muscle.

Its pathway is sulfur metabolism; glutathione biosynthesis; glutathione from L-cysteine and L-glutamate: step 1/2. This Homo sapiens (Human) protein is Glutamate--cysteine ligase regulatory subunit (GCLM).